We begin with the raw amino-acid sequence, 85 residues long: Conotoxin Cap15a (85 aa).

Residues Met-1–Ser-23 form the signal peptide. Residues Val-24–Arg-49 constitute a propeptide that is removed on maturation. Gln-50 carries the pyrrolidone carboxylic acid modification.

This sequence belongs to the conotoxin O2 superfamily. In terms of processing, contains 4 disulfide bonds. In terms of tissue distribution, expressed by the venom duct.

Its subcellular location is the secreted. This is Conotoxin Cap15a from Conus capitaneus (Captain cone).